The sequence spans 461 residues: Cysteine--tRNA ligase (461 aa).

A Zn(2+)-binding site is contributed by C28. Residues 30–40 (ITVYDLCHIGH) carry the 'HIGH' region motif. Positions 209, 234, and 238 each coordinate Zn(2+). Positions 266 to 270 (KMSKS) match the 'KMSKS' region motif. K269 contacts ATP.

Belongs to the class-I aminoacyl-tRNA synthetase family. In terms of assembly, monomer. Requires Zn(2+) as cofactor.

The protein resides in the cytoplasm. The catalysed reaction is tRNA(Cys) + L-cysteine + ATP = L-cysteinyl-tRNA(Cys) + AMP + diphosphate. The sequence is that of Cysteine--tRNA ligase from Escherichia fergusonii (strain ATCC 35469 / DSM 13698 / CCUG 18766 / IAM 14443 / JCM 21226 / LMG 7866 / NBRC 102419 / NCTC 12128 / CDC 0568-73).